We begin with the raw amino-acid sequence, 823 residues long: Leucine--tRNA ligase (823 aa).

The 'HIGH' region motif lies at 42-52; it reads PYPSGTLHMGH. The short motif at 575–579 is the 'KMSKS' region element; sequence KMSKS. K578 lines the ATP pocket.

This sequence belongs to the class-I aminoacyl-tRNA synthetase family.

The protein resides in the cytoplasm. The catalysed reaction is tRNA(Leu) + L-leucine + ATP = L-leucyl-tRNA(Leu) + AMP + diphosphate. The sequence is that of Leucine--tRNA ligase from Legionella pneumophila subsp. pneumophila (strain Philadelphia 1 / ATCC 33152 / DSM 7513).